A 70-amino-acid polypeptide reads, in one-letter code: Conotoxin Lt11.2 (70 aa).

Residues 1 to 26 (MMFRLTSVSCFLLFIVFLNLVVLTNA) form the signal peptide. 4 disulfides stabilise this stretch: cysteine 27-cysteine 41, cysteine 34-cysteine 46, cysteine 40-cysteine 50, and cysteine 45-cysteine 54. Position 57 is a proline amide (proline 57). The propeptide occupies 61–70 (EKLQEFFRQR).

This sequence belongs to the conotoxin I2 superfamily. Expressed by the venom duct.

It is found in the secreted. This Conus litteratus (Lettered cone) protein is Conotoxin Lt11.2.